The chain runs to 572 residues: Formate--tetrahydrofolate ligase (572 aa).

Position 81–88 (81–88 (TPAGEGKT)) interacts with ATP.

This sequence belongs to the formate--tetrahydrofolate ligase family.

It catalyses the reaction (6S)-5,6,7,8-tetrahydrofolate + formate + ATP = (6R)-10-formyltetrahydrofolate + ADP + phosphate. It participates in one-carbon metabolism; tetrahydrofolate interconversion. The polypeptide is Formate--tetrahydrofolate ligase (Granulibacter bethesdensis (strain ATCC BAA-1260 / CGDNIH1)).